The sequence spans 149 residues: Glutamyl-tRNA(Gln) amidotransferase subunit C, mitochondrial (149 aa).

A mitochondrion-targeting transit peptide spans 1–25 (MNHLHRLFRITQVDRPVLLAITRRL).

This sequence belongs to the GatC family. As to quaternary structure, subunit of the heterotrimeric GatCAB amidotransferase (AdT) complex, composed of A, B and C subunits.

It localises to the mitochondrion. The enzyme catalyses L-glutamyl-tRNA(Gln) + L-glutamine + ATP + H2O = L-glutaminyl-tRNA(Gln) + L-glutamate + ADP + phosphate + H(+). Allows the formation of correctly charged Gln-tRNA(Gln) through the transamidation of misacylated Glu-tRNA(Gln) in the mitochondria. The reaction takes place in the presence of glutamine and ATP through an activated gamma-phospho-Glu-tRNA(Gln). The polypeptide is Glutamyl-tRNA(Gln) amidotransferase subunit C, mitochondrial (Branchiostoma floridae (Florida lancelet)).